A 62-amino-acid chain; its full sequence is Large ribosomal subunit protein eL24 (62 aa).

Zn(2+)-binding residues include C6, C9, C32, and C36. The segment at 6–36 (CSFCEGTIEPGCGKKYVKKDGSVMHFCSSKC) adopts a C4-type zinc-finger fold.

It belongs to the eukaryotic ribosomal protein eL24 family. Part of the 50S ribosomal subunit. Forms a cluster with proteins L3 and L14. Zn(2+) serves as cofactor.

Binds to the 23S rRNA. This chain is Large ribosomal subunit protein eL24, found in Methanococcus maripaludis (strain C5 / ATCC BAA-1333).